We begin with the raw amino-acid sequence, 557 residues long: Formate--tetrahydrofolate ligase 2 (557 aa).

An ATP-binding site is contributed by 66-73 (TPAGEGKT).

The protein belongs to the formate--tetrahydrofolate ligase family.

The enzyme catalyses (6S)-5,6,7,8-tetrahydrofolate + formate + ATP = (6R)-10-formyltetrahydrofolate + ADP + phosphate. It functions in the pathway one-carbon metabolism; tetrahydrofolate interconversion. The chain is Formate--tetrahydrofolate ligase 2 from Streptococcus pyogenes serotype M4 (strain MGAS10750).